A 355-amino-acid chain; its full sequence is S-adenosylmethionine:tRNA ribosyltransferase-isomerase (355 aa).

This sequence belongs to the QueA family. In terms of assembly, monomer.

It is found in the cytoplasm. It catalyses the reaction 7-aminomethyl-7-carbaguanosine(34) in tRNA + S-adenosyl-L-methionine = epoxyqueuosine(34) in tRNA + adenine + L-methionine + 2 H(+). It functions in the pathway tRNA modification; tRNA-queuosine biosynthesis. Its function is as follows. Transfers and isomerizes the ribose moiety from AdoMet to the 7-aminomethyl group of 7-deazaguanine (preQ1-tRNA) to give epoxyqueuosine (oQ-tRNA). The chain is S-adenosylmethionine:tRNA ribosyltransferase-isomerase from Aeromonas salmonicida (strain A449).